Here is a 314-residue protein sequence, read N- to C-terminus: Ribosomal RNA small subunit methyltransferase H (314 aa).

Residues 35 to 37 (GGH), aspartate 55, phenylalanine 79, aspartate 101, and glutamine 108 contribute to the S-adenosyl-L-methionine site. Residues 276–296 (QGGQTLKPVGKKLMPSEAEVA) are disordered.

It belongs to the methyltransferase superfamily. RsmH family.

It is found in the cytoplasm. It carries out the reaction cytidine(1402) in 16S rRNA + S-adenosyl-L-methionine = N(4)-methylcytidine(1402) in 16S rRNA + S-adenosyl-L-homocysteine + H(+). Functionally, specifically methylates the N4 position of cytidine in position 1402 (C1402) of 16S rRNA. The protein is Ribosomal RNA small subunit methyltransferase H of Pectobacterium atrosepticum (strain SCRI 1043 / ATCC BAA-672) (Erwinia carotovora subsp. atroseptica).